The following is a 40-amino-acid chain: uncharacterized protein (40 aa).

The helical transmembrane segment at 20-37 threads the bilayer; it reads TYLYWTAVTAAYLTYLTI.

The protein resides in the membrane. This is an uncharacterized protein from Archaeoglobus fulgidus (strain ATCC 49558 / DSM 4304 / JCM 9628 / NBRC 100126 / VC-16).